The sequence spans 160 residues: Cytochrome b6-f complex subunit 4 (160 aa).

Transmembrane regions (helical) follow at residues 36–56, 95–115, and 131–151; these read LLYIFPVVIFGTIACNVGLAV, LLGVLLMAAVPAGLLTVPFLE, and TVFLIGTVVSIWLGIGAAMPI.

This sequence belongs to the cytochrome b family. PetD subfamily. The 4 large subunits of the cytochrome b6-f complex are cytochrome b6, subunit IV (17 kDa polypeptide, petD), cytochrome f and the Rieske protein, while the 4 small subunits are petG, petL, petM and petN. The complex functions as a dimer.

Its subcellular location is the plastid. The protein resides in the chloroplast thylakoid membrane. In terms of biological role, component of the cytochrome b6-f complex, which mediates electron transfer between photosystem II (PSII) and photosystem I (PSI), cyclic electron flow around PSI, and state transitions. This Zygnema circumcarinatum (Green alga) protein is Cytochrome b6-f complex subunit 4.